The chain runs to 701 residues: Elongation factor G (701 aa).

A tr-type G domain is found at 8–290; sequence SLYRNIGISA…AVIDYLPAPT (283 aa). GTP-binding positions include 17–24, 88–92, and 142–145; these read AHIDAGKT, DTPGH, and NKMD.

The protein belongs to the TRAFAC class translation factor GTPase superfamily. Classic translation factor GTPase family. EF-G/EF-2 subfamily.

The protein resides in the cytoplasm. Functionally, catalyzes the GTP-dependent ribosomal translocation step during translation elongation. During this step, the ribosome changes from the pre-translocational (PRE) to the post-translocational (POST) state as the newly formed A-site-bound peptidyl-tRNA and P-site-bound deacylated tRNA move to the P and E sites, respectively. Catalyzes the coordinated movement of the two tRNA molecules, the mRNA and conformational changes in the ribosome. This chain is Elongation factor G, found in Haemophilus ducreyi (strain 35000HP / ATCC 700724).